The following is a 75-amino-acid chain: Brevinin-2SN2 (75 aa).

A signal peptide spans 1–22 (MFTMKKSLLFLFFLGTISLSFC). Positions 23-40 (EEERGADEDDGGEMTEEE) are cleaved as a propeptide — removed in mature form. A disulfide bridge links Cys69 with Cys75.

The protein belongs to the frog skin active peptide (FSAP) family. Brevinin subfamily. As to expression, expressed by the skin glands.

The protein resides in the secreted. Antimicrobial peptide. Active against some Gram-negative and a variety of Gram-positive bacterial strains. Active against fungus C.glabrata 090902 but not against C.albicans ATCC 10231. Shows hemolytic activity against human erythrocytes. This is Brevinin-2SN2 from Sylvirana spinulosa (Fine-spined frog).